Reading from the N-terminus, the 124-residue chain is Seripauperin-3 (124 aa).

The chain crosses the membrane as a helical span at residues 7-24 (IAAGVAAIAAGIAAAPAT).

This sequence belongs to the SRP1/TIP1 family. Seripauperin subfamily.

It is found in the membrane. The chain is Seripauperin-3 (PAU3) from Saccharomyces cerevisiae (strain ATCC 204508 / S288c) (Baker's yeast).